Reading from the N-terminus, the 269-residue chain is Formamidopyrimidine-DNA glycosylase (269 aa).

Pro-2 (schiff-base intermediate with DNA) is an active-site residue. Glu-3 (proton donor) is an active-site residue. Lys-57 functions as the Proton donor; for beta-elimination activity in the catalytic mechanism. DNA contacts are provided by His-90, Arg-109, and Lys-150. The segment at 235 to 269 (QVYGRKGEPCRVCGTPIVATKHAQRATFYCRQCQK) adopts an FPG-type zinc-finger fold. Arg-259 serves as the catalytic Proton donor; for delta-elimination activity.

It belongs to the FPG family. Monomer. It depends on Zn(2+) as a cofactor.

The enzyme catalyses Hydrolysis of DNA containing ring-opened 7-methylguanine residues, releasing 2,6-diamino-4-hydroxy-5-(N-methyl)formamidopyrimidine.. The catalysed reaction is 2'-deoxyribonucleotide-(2'-deoxyribose 5'-phosphate)-2'-deoxyribonucleotide-DNA = a 3'-end 2'-deoxyribonucleotide-(2,3-dehydro-2,3-deoxyribose 5'-phosphate)-DNA + a 5'-end 5'-phospho-2'-deoxyribonucleoside-DNA + H(+). Functionally, involved in base excision repair of DNA damaged by oxidation or by mutagenic agents. Acts as a DNA glycosylase that recognizes and removes damaged bases. Has a preference for oxidized purines, such as 7,8-dihydro-8-oxoguanine (8-oxoG). Has AP (apurinic/apyrimidinic) lyase activity and introduces nicks in the DNA strand. Cleaves the DNA backbone by beta-delta elimination to generate a single-strand break at the site of the removed base with both 3'- and 5'-phosphates. The sequence is that of Formamidopyrimidine-DNA glycosylase from Escherichia coli O157:H7.